The primary structure comprises 726 residues: tRNA endonuclease ANKZF1 (726 aa).

Residues 40–61 (LARAPRTSCSGSGERESPERKL) form a disordered region. Residues 52-61 (GERESPERKL) show a composition bias toward basic and acidic residues. The C2H2-type zinc-finger motif lies at 72 to 96 (LFCSTCDQTFQNHQEQREHYKLDWH). Residues 120–130 (STGDLSSISGS) are compositionally biased toward low complexity. Residues 120-141 (STGDLSSISGSEDSDSASEEDL) are disordered. A compositionally biased stretch (acidic residues) spans 131–141 (EDSDSASEEDL). Residues 203–346 (GPRDCVVLMA…QRVLHKLTTL (144 aa)) form the VLRF1 domain. Gln-246 is a catalytic residue. Ser-258, Ser-361, and Ser-398 each carry phosphoserine. Disordered stretches follow at residues 387–409 (DEKE…EGED) and 436–474 (RRRR…SSQA). The span at 436–445 (RRRRKRNKKE) shows a compositional bias: basic residues. The span at 457–473 (TLLQQTQEEEPSTQSSQ) shows a compositional bias: low complexity. The ANK 1 repeat unit spans residues 493–526 (ELWNALLAACRAGDVGVLKLQLAPSPADPRVLSL). Phosphoserine is present on Ser-533. The ANK 2 repeat unit spans residues 534–563 (GGFTLLHAAAAAGRGSVVRLLLEAGADPTV). The disordered stretch occupies residues 588–656 (MEKNPDAYDY…RRFAALSDRE (69 aa)). Phosphothreonine is present on Thr-607. The stretch at 609-659 (EMEARQATRKREQKAARRQREEQQQRQQEQEEREREEQRRFAALSDREKRA) forms a coiled coil. The span at 610-656 (MEARQATRKREQKAARRQREEQQQRQQEQEEREREEQRRFAALSDRE) shows a compositional bias: basic and acidic residues. A VCP/p97-interacting motif (VIM) region spans residues 654–666 (DREKRALAAERRL). Ser-675 and Ser-680 each carry phosphoserine.

This sequence belongs to the ANKZF1/VMS1 family. As to quaternary structure, interacts (via VIM motif) with VCP.

It localises to the cytoplasm. Functionally, endonuclease that cleaves polypeptidyl-tRNAs downstream of the ribosome-associated quality control (RQC) pathway to release incompletely synthesized polypeptides for degradation. The RQC pathway disassembles aberrantly stalled translation complexes to recycle or degrade the constituent parts. ANKZF1 acts downstream disassembly of stalled ribosomes and specifically cleaves off the terminal 3'-CCA nucleotides universal to all tRNAs from polypeptidyl-tRNAs, releasing (1) ubiquitinated polypeptides from 60S ribosomal subunit for degradation and (2) cleaved tRNAs. ANKZF1-cleaved tRNAs are then repaired and recycled by ELAC1 and TRNT1. Also plays a role in the cellular response to hydrogen peroxide and in the maintenance of mitochondrial integrity under conditions of cellular stress. This is tRNA endonuclease ANKZF1 from Homo sapiens (Human).